Here is a 194-residue protein sequence, read N- to C-terminus: Ion-translocating oxidoreductase complex subunit A (194 aa).

A run of 6 helical transmembrane segments spans residues 4 to 24 (LALILVSAILVNNFVLVQFLG), 39 to 59 (IGLSLATTFVLTLAAICSYIL), 71 to 91 (FLRTIGFILVIAVVVQFTEML), 102 to 122 (VLGIFLPLITTNCIVLGVALL), 135 to 155 (TTQGFGAGLGFSLVLVLFAAL), and 172 to 192 (AIGMITAGLMSLAFMGFSGLI).

It belongs to the NqrDE/RnfAE family. As to quaternary structure, the complex is composed of six subunits: RnfA, RnfB, RnfC, RnfD, RnfE and RnfG.

The protein localises to the cell inner membrane. Its function is as follows. Part of a membrane-bound complex that couples electron transfer with translocation of ions across the membrane. In Pseudomonas paraeruginosa (strain DSM 24068 / PA7) (Pseudomonas aeruginosa (strain PA7)), this protein is Ion-translocating oxidoreductase complex subunit A.